Here is a 342-residue protein sequence, read N- to C-terminus: MRAPEFQSNTTTSTGCDVCLDPQKSFANLFKRTVILLSGPTGSGKTDVSLRLASMVDGEIISVDSMQVYRGMDIGTAKVSLEDRQRIPHYLIDICHVQELFNAVDFYYQAMHACQNILSRNKVPILVGGSGFYFHTFLSGPPGGPPADREFRDQLALYIQDHGLSFLYENLCQKDPEYARTITKNDKNKIVRALEIIHLTGRKVSEHSWSMEPQESREYNCRGWFLSPPKELLLDNIQLRCQKMLEDNLIGEVRGLLEQGIRENSSASKAIGYREWIEFIDQGSPEEAYEAVKQKFITNTCQYTKKQRTWFKRYPVFRELPTLGLTAETLAGKIAEDYFLHG.

39 to 46 (GPTGSGKT) contributes to the ATP binding site. 41–46 (TGSGKT) serves as a coordination point for substrate. The segment at 64–67 (DSMQ) is interaction with substrate tRNA.

This sequence belongs to the IPP transferase family. Monomer. Requires Mg(2+) as cofactor.

It carries out the reaction adenosine(37) in tRNA + dimethylallyl diphosphate = N(6)-dimethylallyladenosine(37) in tRNA + diphosphate. Catalyzes the transfer of a dimethylallyl group onto the adenine at position 37 in tRNAs that read codons beginning with uridine, leading to the formation of N6-(dimethylallyl)adenosine (i(6)A). In Chlamydia caviae (strain ATCC VR-813 / DSM 19441 / 03DC25 / GPIC) (Chlamydophila caviae), this protein is tRNA dimethylallyltransferase.